The chain runs to 1046 residues: UDP-N-acetylglucosamine--peptide N-acetylglucosaminyltransferase 110 kDa subunit (1046 aa).

N-acetylalanine is present on A2. S3 and S4 each carry phosphoserine; by GSK3-beta; alternate. Residues S3 and S4 are each glycosylated (O-linked (GlcNAc) serine; alternate). S20 is subject to Phosphoserine. TPR repeat units lie at residues F21–N54, A89–F122, I123–L156, Y157–F190, A191–F224, L225–H258, A259–F292, P293–H326, A327–F360, A361–F394, A395–F428, and A429–F462. A glycan (O-linked (GlcNAc) serine; by autocatalysis) is linked at S399. Phosphothreonine is present on T454. A TPR 13; truncated repeat occupies P463–L473. A DFP motif motif is present at residues D464–Y466. A Nuclear localization signal motif is present at residues K487–P503. H508 serves as the catalytic Proton acceptor. UDP-binding positions include Q849, K852, A906 to K908, H911 to R914, H930 to T932, and D935. Y989 is subject to Phosphotyrosine. The interval K991–K1010 is required for phosphatidylinositol 3,4,5-triphosphate binding.

Belongs to the glycosyltransferase 41 family. O-GlcNAc transferase subfamily. In terms of assembly, monomer; may exist in different oligomerization states in cells. Homotrimer, oligomerizes via TPR repeats 6 and 7. Trimerization is not necessary for activity in vitro, however it increases affinity for UDP-GlcNAc. Component of a THAP1/THAP3-HCFC1-OGT complex. Component of the NSL complex at least composed of MOF/KAT8, KANSL1, KANSL2, KANSL3, MCRS1, PHF20, OGT1/OGT, WDR5 and HCFC1. Found in a complex with KIF5B, RHOT1, RHOT2 and TRAK1. Found in a complex composed of at least SINHCAF, SIN3A, HDAC1, SAP30, RBBP4, OGT and TET1. Component of a complex composed of KMT2E/MLL5, OGT and USP7; the complex stabilizes KMT2E/MLL5, preventing KMT2E/MLL5 ubiquitination and proteasomal-mediated degradation. Interacts (via TPRs 1-6) with SIN3A; the interaction mediates transcriptional repression in parallel with histone deacetylase. Interacts (via TPR 5-6) with TET1, TET2 and TET3. Interacts (via TPR repeats 6 and 7) with ATXN10. Interacts with NSD2. Interacts with PROSER1; this interaction mediates TET2 O-GlcNAcylation and stability by promoting the interaction between OGT and TET2. Ubiquitinated by the SCF(FBXO31) complex, leading to its proteasomal degradation. Post-translationally, phosphorylation on Ser-3 or Ser-4 by GSK3-beta positively regulates its activity. Phosphorylation at Thr-454 by AMPK promotes nuclear localization. In terms of processing, glycosylated via autocatalysis; O-GlcNAcylation at Ser-399 promotes nuclear localization.

It is found in the nucleus. Its subcellular location is the cytoplasm. The enzyme catalyses L-seryl-[protein] + UDP-N-acetyl-alpha-D-glucosamine = 3-O-(N-acetyl-beta-D-glucosaminyl)-L-seryl-[protein] + UDP + H(+). It carries out the reaction L-threonyl-[protein] + UDP-N-acetyl-alpha-D-glucosamine = 3-O-(N-acetyl-beta-D-glucosaminyl)-L-threonyl-[protein] + UDP + H(+). It functions in the pathway protein modification; protein glycosylation. With respect to regulation, inhibited by UDP. Functionally, catalyzes the transfer of a single N-acetylglucosamine from UDP-GlcNAc to a serine or threonine residue in cytoplasmic and nuclear proteins resulting in their modification with a beta-linked N-acetylglucosamine (O-GlcNAc). Glycosylates a large and diverse number of proteins including histone H2B, AKT1, AMPK, ATG4B, CAPRIN1, EZH2, FNIP1, GSDMD, KRT7, LMNA, LMNB1, LMNB2, RPTOR, HOXA1, PFKL, KMT2E/MLL5, MAPT/TAU, TET2, RBL2, RET, NOD2 and HCFC1. Can regulate their cellular processes via cross-talk between glycosylation and phosphorylation or by affecting proteolytic processing. Involved in insulin resistance in muscle and adipocyte cells via glycosylating insulin signaling components and inhibiting the 'Thr-308' phosphorylation of AKT1, enhancing IRS1 phosphorylation and attenuating insulin signaling. Involved in glycolysis regulation by mediating glycosylation of 6-phosphofructokinase PFKL, inhibiting its activity. Plays a key role in chromatin structure by mediating O-GlcNAcylation of 'Ser-112' of histone H2B: recruited to CpG-rich transcription start sites of active genes via its interaction with TET proteins (TET1, TET2 or TET3). As part of the NSL complex indirectly involved in acetylation of nucleosomal histone H4 on several lysine residues. O-GlcNAcylation of 'Ser-75' of EZH2 increases its stability, and facilitating the formation of H3K27me3 by the PRC2/EED-EZH2 complex. Stabilizes KMT2E/MLL5 by mediating its glycosylation, thereby preventing KMT2E/MLL5 ubiquitination. Regulates circadian oscillation of the clock genes and glucose homeostasis in the liver. Stabilizes clock proteins BMAL1 and CLOCK through O-glycosylation, which prevents their ubiquitination and subsequent degradation. Promotes the CLOCK-BMAL1-mediated transcription of genes in the negative loop of the circadian clock such as PER1/2 and CRY1/2. O-glycosylates HCFC1 and regulates its proteolytic processing and transcriptional activity. Component of a THAP1/THAP3-HCFC1-OGT complex that is required for the regulation of the transcriptional activity of RRM1. Regulates mitochondrial motility in neurons by mediating glycosylation of TRAK1. Promotes autophagy by mediating O-glycosylation of ATG4B. Acts as a regulator of mTORC1 signaling by mediating O-glycosylation of RPTOR and FNIP1: O-GlcNAcylation of RPTOR in response to glucose sufficiency promotes activation of the mTORC1 complex. Catalyzes the transfer of a single N-acetylglucosamine from UDP-GlcNAc to a serine or threonine residue. Acts on cytoplasmic and nuclear proteins resulting in their modification with a beta-linked N-acetylglucosamine (O-GlcNAc). Glycosylates a large and diverse number of proteins including histone H2B, AKT1, ATG4B, EZH2, PFKL, KMT2E/MLL5, MAPT/TAU, NOD2 and HCFC1. Can regulate their cellular processes via cross-talk between glycosylation and phosphorylation or by affecting proteolytic processing. Probably by glycosylating KMT2E/MLL5, stabilizes KMT2E/MLL5 by preventing its ubiquitination. Involved in insulin resistance in muscle and adipocyte cells via glycosylating insulin signaling components and inhibiting the 'Thr-308' phosphorylation of AKT1, enhancing IRS1 phosphorylation and attenuating insulin signaling. Involved in glycolysis regulation by mediating glycosylation of 6-phosphofructokinase PFKL, inhibiting its activity. Component of a THAP1/THAP3-HCFC1-OGT complex that is required for the regulation of the transcriptional activity of RRM1. Plays a key role in chromatin structure by mediating O-GlcNAcylation of 'Ser-112' of histone H2B: recruited to CpG-rich transcription start sites of active genes via its interaction with TET proteins (TET1, TET2 or TET3). As part of the NSL complex indirectly involved in acetylation of nucleosomal histone H4 on several lysine residues. O-GlcNAcylation of 'Ser-75' of EZH2 increases its stability, and facilitating the formation of H3K27me3 by the PRC2/EED-EZH2 complex. Regulates circadian oscillation of the clock genes and glucose homeostasis in the liver. Stabilizes clock proteins BMAL1 and CLOCK through O-glycosylation, which prevents their ubiquitination and subsequent degradation. Promotes the CLOCK-BMAL1-mediated transcription of genes in the negative loop of the circadian clock such as PER1/2 and CRY1/2. O-glycosylates HCFC1 and regulates its proteolytic processing and transcriptional activity. Regulates mitochondrial motility in neurons by mediating glycosylation of TRAK1. Glycosylates HOXA1. O-glycosylates FNIP1. Promotes autophagy by mediating O-glycosylation of ATG4B. The polypeptide is UDP-N-acetylglucosamine--peptide N-acetylglucosaminyltransferase 110 kDa subunit (OGT) (Oryctolagus cuniculus (Rabbit)).